The following is a 124-amino-acid chain: Small ribosomal subunit protein uS12 (124 aa).

Positions 1–32 (MPTIQQLVRKGRQDKVEKTKTPALKGSPQRRG) are disordered. Residues 11–20 (GRQDKVEKTK) are compositionally biased toward basic and acidic residues. Position 89 is a 3-methylthioaspartic acid (aspartate 89).

It belongs to the universal ribosomal protein uS12 family. In terms of assembly, part of the 30S ribosomal subunit. Contacts proteins S8 and S17. May interact with IF1 in the 30S initiation complex.

Its function is as follows. With S4 and S5 plays an important role in translational accuracy. Interacts with and stabilizes bases of the 16S rRNA that are involved in tRNA selection in the A site and with the mRNA backbone. Located at the interface of the 30S and 50S subunits, it traverses the body of the 30S subunit contacting proteins on the other side and probably holding the rRNA structure together. The combined cluster of proteins S8, S12 and S17 appears to hold together the shoulder and platform of the 30S subunit. The protein is Small ribosomal subunit protein uS12 of Frankia alni (strain DSM 45986 / CECT 9034 / ACN14a).